A 545-amino-acid chain; its full sequence is Chaperonin GroEL (545 aa).

ATP contacts are provided by residues 30–33, Lys51, 87–91, Gly415, and Asp495; these read TLGP and DGTTT.

Belongs to the chaperonin (HSP60) family. Forms a cylinder of 14 subunits composed of two heptameric rings stacked back-to-back. Interacts with the co-chaperonin GroES.

It localises to the cytoplasm. The catalysed reaction is ATP + H2O + a folded polypeptide = ADP + phosphate + an unfolded polypeptide.. Its function is as follows. Together with its co-chaperonin GroES, plays an essential role in assisting protein folding. The GroEL-GroES system forms a nano-cage that allows encapsulation of the non-native substrate proteins and provides a physical environment optimized to promote and accelerate protein folding. The sequence is that of Chaperonin GroEL from Shewanella sp. (strain MR-7).